Consider the following 280-residue polypeptide: Adenosylcobinamide-GDP ribazoletransferase (280 aa).

The next 7 helical transmembrane spans lie at 4 to 24 (YLLA…GITM), 34 to 54 (IFFY…VAYA), 58 to 78 (VFPG…ITGF), 108 to 128 (TLGT…YGSI), 136 to 156 (IAAF…IAEV), 197 to 217 (LIGF…IGLI), and 254 to 274 (ITAL…YLGG).

It belongs to the CobS family. The cofactor is Mg(2+).

It localises to the cell membrane. The catalysed reaction is alpha-ribazole + adenosylcob(III)inamide-GDP = adenosylcob(III)alamin + GMP + H(+). It catalyses the reaction alpha-ribazole 5'-phosphate + adenosylcob(III)inamide-GDP = adenosylcob(III)alamin 5'-phosphate + GMP + H(+). Its pathway is cofactor biosynthesis; adenosylcobalamin biosynthesis; adenosylcobalamin from cob(II)yrinate a,c-diamide: step 7/7. Functionally, joins adenosylcobinamide-GDP and alpha-ribazole to generate adenosylcobalamin (Ado-cobalamin). Also synthesizes adenosylcobalamin 5'-phosphate from adenosylcobinamide-GDP and alpha-ribazole 5'-phosphate. In Methanosarcina mazei (strain ATCC BAA-159 / DSM 3647 / Goe1 / Go1 / JCM 11833 / OCM 88) (Methanosarcina frisia), this protein is Adenosylcobinamide-GDP ribazoletransferase.